We begin with the raw amino-acid sequence, 273 residues long: Type II iodothyronine deiodinase (273 aa).

Residues 1–9 (MGILSVDLL) lie on the Lumenal side of the membrane. Residues 10–34 (ITLQILPVFFSNCLFLALYDSVILL) form a helical; Signal-anchor for type III membrane protein membrane-spanning segment. The Cytoplasmic segment spans residues 35–273 (KHVVLLLSRS…KRUKKTRLAG (239 aa)). U133 is an active-site residue. Non-standard amino acids (selenocysteine) are located at U133 and U266.

This sequence belongs to the iodothyronine deiodinase family. In terms of assembly, predominantly monomer. Can form homodimers but homodimerization is not essential for enzyme activity. Interacts with USP20 and USP33. Interacts with MARCHF6. In terms of processing, ubiquitinated by MARCHF6, leading to its degradation by the proteasome. Deubiquitinated by USP20 and USP33. As to expression, isoform 1 is expressed in the lung, trachea, kidney, heart, skeletal muscle, placenta, fetal brain and several regions of the adult brain. Isoform 2 is expressed in the brain, heart, kidney and trachea.

The protein localises to the endoplasmic reticulum membrane. It carries out the reaction 3,3',5-triiodo-L-thyronine + iodide + A + H(+) = L-thyroxine + AH2. The catalysed reaction is 3,3'-diiodo-L-thyronine + iodide + A + H(+) = 3,3',5'-triiodo-L-thyronine + AH2. It catalyses the reaction 3'-iodo-L-thyronine + iodide + A + H(+) = 3',5'-diiodo-L-thyronine + AH2. The enzyme catalyses 3,3'-diiodothyronamine + iodide + A + H(+) = 3,3',5'-triiodothyronamine + AH2. It carries out the reaction 3'-iodothyronamine + iodide + A + H(+) = 3',5'-diiodothyronamine + AH2. Its function is as follows. Plays a crucial role in the metabolism of thyroid hormones (TH) and has specific roles in TH activation and inactivation by deiodination. Catalyzes the deiodination of L-thyroxine (T4) to 3,5,3'-triiodothyronine (T3), 3,3',5'-triiodothyronine (rT3) to 3,3'-diiodothyronine (3,3'-T2) and 3',5'-diiodothyronine (3',5'-T2) to 3'-monoiodothyronine (3'-T1) via outer-ring deiodination (ORD). Catalyzes the phenolic ring deiodinations of 3,3',5'-triiodothyronamine and 3',5'- diiodothyronamine. The polypeptide is Type II iodothyronine deiodinase (DIO2) (Homo sapiens (Human)).